The chain runs to 1311 residues: DENN domain-containing protein 5B (1311 aa).

A uDENN domain is found at 53–270 (ATAAGENFDQ…EVPLPASGRS (218 aa)). The segment covering 154 to 165 (QAEHNTSAQNCT) has biased composition (polar residues). The interval 154 to 201 (QAEHNTSAQNCTSSSSSSSSSSSSSSMDSLSSSLDDVDSPSAHGGRRT) is disordered. A compositionally biased stretch (low complexity) spans 166-187 (SSSSSSSSSSSSSSMDSLSSSL). Residues 289–452 (ELPLADFPLA…AVMSLQTSVL (164 aa)) form the cDENN domain. The dDENN domain maps to 454–619 (KELKSTSLRE…DNKIMSQWEE (166 aa)). An RUN 1 domain is found at 809-969 (LEENTLIASL…DYFCFTSVFT (161 aa)). A disordered region spans residues 854 to 874 (EQQLESPVSNGQERRKTESSV). Residues 962–982 (FCFTSVFTTIMIPYRAVIIPI) form a helical membrane-spanning segment. The PLAT domain occupies 973–1081 (IPYRAVIIPI…DDGSLERVLI (109 aa)). An RUN 2 domain is found at 1155-1306 (TVLLCGEGGL…FPITLETSLT (152 aa)).

Belongs to the RAB6IP1 family.

It is found in the membrane. Guanine nucleotide exchange factor (GEF) which may activate the small GTPases Rab. May promote the exchange of GDP to GTP, converting inactive GDP-bound Rab proteins into their active GTP-bound form. This Danio rerio (Zebrafish) protein is DENN domain-containing protein 5B (dennd5b).